A 277-amino-acid polypeptide reads, in one-letter code: Bifunctional protein FolD (277 aa).

NADP(+) contacts are provided by residues 160–162, serine 185, and isoleucine 226; that span reads GAS.

The protein belongs to the tetrahydrofolate dehydrogenase/cyclohydrolase family. Homodimer.

It catalyses the reaction (6R)-5,10-methylene-5,6,7,8-tetrahydrofolate + NADP(+) = (6R)-5,10-methenyltetrahydrofolate + NADPH. The enzyme catalyses (6R)-5,10-methenyltetrahydrofolate + H2O = (6R)-10-formyltetrahydrofolate + H(+). Its pathway is one-carbon metabolism; tetrahydrofolate interconversion. Functionally, catalyzes the oxidation of 5,10-methylenetetrahydrofolate to 5,10-methenyltetrahydrofolate and then the hydrolysis of 5,10-methenyltetrahydrofolate to 10-formyltetrahydrofolate. The sequence is that of Bifunctional protein FolD from Ruthia magnifica subsp. Calyptogena magnifica.